A 679-amino-acid polypeptide reads, in one-letter code: Protein white (679 aa).

The disordered stretch occupies residues 1–34 (MGQEDQEVLIRGGKATSTSAESLNNNNEQPYEQS). Residues 15–34 (ATSTSAESLNNNNEQPYEQS) show a composition bias toward polar residues. The region spanning 84–332 (NRVKGVFCNE…FSYIGATCPT (249 aa)) is the ABC transporter domain. 121–128 (GSSGAGKT) contributes to the ATP binding site. 5 consecutive transmembrane segments (helical) span residues 427–445 (LLQT…LGQQ), 457–477 (AIFL…ITVF), 507–525 (LPLF…YPLI), 534–555 (FFTA…GYLI), and 568–586 (VGPP…FLNS). N-linked (GlcNAc...) asparagine glycans are attached at residues N628 and N643. The helical transmembrane segment at 651 to 670 (FDFIGLALLIVGFRISAYIA) threads the bilayer.

Belongs to the ABC transporter superfamily. ABCG family. Eye pigment precursor importer (TC 3.A.1.204) subfamily.

It is found in the membrane. Functionally, may be part of a membrane-spanning permease system necessary for the transport of pigment precursors into pigment cells responsible for eye color. This is Protein white (W) from Ceratitis capitata (Mediterranean fruit fly).